Consider the following 154-residue polypeptide: Deoxyuridine 5'-triphosphate nucleotidohydrolase (154 aa).

Residues 72–74 (RSG), Asn85, 89–91 (LID), and Met99 contribute to the substrate site.

It belongs to the dUTPase family. Mg(2+) serves as cofactor.

It catalyses the reaction dUTP + H2O = dUMP + diphosphate + H(+). It functions in the pathway pyrimidine metabolism; dUMP biosynthesis; dUMP from dCTP (dUTP route): step 2/2. Functionally, this enzyme is involved in nucleotide metabolism: it produces dUMP, the immediate precursor of thymidine nucleotides and it decreases the intracellular concentration of dUTP so that uracil cannot be incorporated into DNA. The sequence is that of Deoxyuridine 5'-triphosphate nucleotidohydrolase from Psychrobacter sp. (strain PRwf-1).